A 260-amino-acid polypeptide reads, in one-letter code: Cytochrome c1-2, heme protein, mitochondrial (260 aa).

The N-terminal 17 residues, 1-17 (IGAGVSGLLGFATVASA), are a transit peptide targeting the mitochondrion. Residues 18-221 (DEAEHGLECP…AAEPEMEERK (204 aa)) lie on the Mitochondrial intermembrane side of the membrane. The 108-residue stretch at 43 to 150 (ASIRRGHQVY…NGQNYVFALL (108 aa)) folds into the Cytochrome c domain. Positions 56, 59, 60, and 179 each coordinate heme c. A helical transmembrane segment spans residues 222-241 (LMGFKWIFVLSLALLQAAYY). The Mitochondrial matrix portion of the chain corresponds to 242–260 (RRLRWSVLKSRKLVLDVVN).

The protein belongs to the cytochrome c family. As to quaternary structure, component of the ubiquinol-cytochrome c oxidoreductase (cytochrome b-c1 complex, complex III, CIII), a multisubunit enzyme composed of 3 respiratory subunits cytochrome b, cytochrome c1 and Rieske protein, 2 core protein subunits, and additional low-molecular weight protein subunits. The complex exists as an obligatory dimer and forms supercomplexes (SCs) in the inner mitochondrial membrane with cytochrome c oxidase (complex IV, CIV). It depends on heme c as a cofactor. As to expression, in all tissues analyzed.

It is found in the mitochondrion inner membrane. It catalyses the reaction a quinol + 2 Fe(III)-[cytochrome c](out) = a quinone + 2 Fe(II)-[cytochrome c](out) + 2 H(+)(out). Component of the ubiquinol-cytochrome c oxidoreductase, a multisubunit transmembrane complex that is part of the mitochondrial electron transport chain which drives oxidative phosphorylation. The respiratory chain contains 3 multisubunit complexes succinate dehydrogenase (complex II, CII), ubiquinol-cytochrome c oxidoreductase (cytochrome b-c1 complex, complex III, CIII) and cytochrome c oxidase (complex IV, CIV), that cooperate to transfer electrons derived from NADH and succinate to molecular oxygen, creating an electrochemical gradient over the inner membrane that drives transmembrane transport and the ATP synthase. The cytochrome b-c1 complex catalyzes electron transfer from ubiquinol to cytochrome c, linking this redox reaction to translocation of protons across the mitochondrial inner membrane, with protons being carried across the membrane as hydrogens on the quinol. In the process called Q cycle, 2 protons are consumed from the matrix, 4 protons are released into the intermembrane space and 2 electrons are passed to cytochrome c. Cytochrome c1 is a catalytic core subunit containing a c-type heme. It transfers electrons from the [2Fe-2S] iron-sulfur cluster of the Rieske protein to cytochrome c. The sequence is that of Cytochrome c1-2, heme protein, mitochondrial (CYCL) from Solanum tuberosum (Potato).